A 656-amino-acid chain; its full sequence is MIKSQKEYLERIEYLNTLSHHYYNLDESIVSDAVYDELYQELKAYEEKNPNDIQANSPTQKVGATTTTPFSKNPHLMRMWSLDDVFNQSELQAWLQRILKVYPNASFVCSPKLDGVSLNLLYHHGKLVSATTRGNGLEGELVTNNAKHIANIPHFIAYDGEIEIRGEVIISKEDFEALNKERLEANEPLFANPRNAASGSLRQLDSEITKKRKLQFIPWGVGKHSLNFLSFKECLDFIVSLGFGAIQYLSLNKNHQEIEESYHTLIKEREGFFALLDGMVIVVNELGIQKELGYTQKSPKFACAYKFPALEKHTKIIGVINQVGRSGAITPVALLEPVEIAGAMVNRATLHNYSEIEKKNIMLNDRVVVIRSGDVIPKIIKPLETYRDGSQHKIERPKVCPICSHELLCEEIFTYCQNLNCPARLKESLIHFASKDALNIQGLGDKVIEQLFEEKLIVNALDLYALKLEDLMRLDKFKIKKAQNLLDAIQKSKNPPLWRLINALGIEHIGKGASKTLARYGLNVLEKSEAEFLEMEGFGVEMAHSLVNFYASNQEFIRSLFDLLNPKNSDMAKEKQKSSSVFNNKTIVLTGTLSKPRQEYAQMLENLGAKISSSVSAKTDFLIVGENPGSKLALAKKHGVSVLNEEELLKRLKELD.

NAD(+) is bound by residues 32–36 (DAVYD) and 81–82 (SL). Lys-112 serves as the catalytic N6-AMP-lysine intermediate. Residues Arg-133, Glu-167, and Lys-306 each contribute to the NAD(+) site. Positions 400, 403, 416, and 421 each coordinate Zn(2+). The BRCT domain occupies 577–656 (KSSSVFNNKT…ELLKRLKELD (80 aa)).

It belongs to the NAD-dependent DNA ligase family. LigA subfamily. Requires Mg(2+) as cofactor. Mn(2+) is required as a cofactor.

It carries out the reaction NAD(+) + (deoxyribonucleotide)n-3'-hydroxyl + 5'-phospho-(deoxyribonucleotide)m = (deoxyribonucleotide)n+m + AMP + beta-nicotinamide D-nucleotide.. Functionally, DNA ligase that catalyzes the formation of phosphodiester linkages between 5'-phosphoryl and 3'-hydroxyl groups in double-stranded DNA using NAD as a coenzyme and as the energy source for the reaction. It is essential for DNA replication and repair of damaged DNA. The protein is DNA ligase of Helicobacter pylori (strain P12).